The primary structure comprises 440 residues: Xylose isomerase (440 aa).

Residues histidine 100 and aspartate 103 contribute to the active site. 7 residues coordinate Mg(2+): glutamate 231, glutamate 267, histidine 270, aspartate 295, aspartate 306, aspartate 308, and aspartate 338.

It belongs to the xylose isomerase family. As to quaternary structure, homotetramer. The cofactor is Mg(2+).

The protein localises to the cytoplasm. The enzyme catalyses alpha-D-xylose = alpha-D-xylulofuranose. The sequence is that of Xylose isomerase from Burkholderia ambifaria (strain MC40-6).